The following is a 415-amino-acid chain: UV excision repair protein RAD23 homolog B (415 aa).

The Ubiquitin-like domain maps to 1–79 (MQVTLKTLQQ…VVVMVTKPKA (79 aa)). Residues 80–175 (VTSAVPATTQ…STPGDSSRSN (96 aa)) form a disordered region. Low complexity predominate over residues 84-143 (VPATTQQSSSPSTTTVSSSPAAAVAQAPAPTPALAPTSTPASTTPASTTASSEPAPTGAT). Thr-155 is modified (phosphothreonine). 2 positions are modified to phosphoserine: Ser-160 and Ser-174. Thr-186 carries the post-translational modification Phosphothreonine. Residues 188–228 (QSYENMVTEIMSMGYEREQVIAALRASFNNPDRAVEYLLMG) enclose the UBA 1 domain. Ser-199 bears the Phosphoserine mark. A Phosphotyrosine modification is found at Tyr-202. Positions 274–317 (HPLEFLRNQPQFQQMRQIIQQNPSLLPALLQQIGRENPQLLQQI) constitute an STI1 domain. Residues 334 to 355 (EAGGQGGGGGGGGGGGGGGGGI) are disordered. Residues 336–355 (GGQGGGGGGGGGGGGGGGGI) show a composition bias toward gly residues. A UBA 2 domain is found at 370–410 (PQEKEAIERLKALGFPEGLVIQAYFACEKNENLAANFLLQQ).

The protein belongs to the RAD23 family. Component of the XPC complex composed of XPC, RAD23B and CETN2. Interacts with NGLY1 and PSMC1. Interacts with ATXN3. Interacts with AMFR. Interacts with VCP; the interaction is indirect and mediated by NGLY1.

The protein localises to the nucleus. Its subcellular location is the cytoplasm. Its function is as follows. Multiubiquitin chain receptor involved in modulation of proteasomal degradation. Binds to polyubiquitin chains. Proposed to be capable to bind simultaneously to the 26S proteasome and to polyubiquitinated substrates and to deliver ubiquitinated proteins to the proteasome. May play a role in endoplasmic reticulum-associated degradation (ERAD) of misfolded glycoproteins by association with PNGase and delivering deglycosylated proteins to the proteasome. Involved in global genome nucleotide excision repair (GG-NER) by acting as component of the XPC complex. Cooperatively with Cetn2 appears to stabilize Xpc. May protect Xpc from proteasomal degradation. In terms of biological role, the XPC complex is proposed to represent the first factor bound at the sites of DNA damage and together with other core recognition factors, Xpa, RPA and the TFIIH complex, is part of the pre-incision (or initial recognition) complex. The XPC complex recognizes a wide spectrum of damaged DNA characterized by distortions of the DNA helix such as single-stranded loops, mismatched bubbles or single-stranded overhangs. The orientation of XPC complex binding appears to be crucial for inducing a productive NER. XPC complex is proposed to recognize and to interact with unpaired bases on the undamaged DNA strand which is followed by recruitment of the TFIIH complex and subsequent scanning for lesions in the opposite strand in a 5'-to-3' direction by the NER machinery. Cyclobutane pyrimidine dimers (CPDs) which are formed upon UV-induced DNA damage esacpe detection by the XPC complex due to a low degree of structural perurbation. Instead they are detected by the UV-DDB complex which in turn recruits and cooperates with the XPC complex in the respective DNA repair. In vitro, the XPC:RAD23B dimer is sufficient to initiate NER; it preferentially binds to cisplatin and UV-damaged double-stranded DNA and also binds to a variety of chemically and structurally diverse DNA adducts. XPC:RAD23B contacts DNA both 5' and 3' of a cisplatin lesion with a preference for the 5' side. Xpc:Rad22b induces a bend in DNA upon binding. Xpc:Rad23b stimulates the activity of DNA glycosylases Tdg and Smug1. The protein is UV excision repair protein RAD23 homolog B (Rad23b) of Rattus norvegicus (Rat).